Consider the following 629-residue polypeptide: Hemocyanin C chain (629 aa).

Cu cation-binding residues include His175, His179, His206, His326, His330, and His366. Asn451 carries an N-linked (GlcNAc...) asparagine glycan. Residues Cys537 and Cys585 are joined by a disulfide bond. Asn618 is a glycosylation site (N-linked (GlcNAc...) asparagine).

Belongs to the tyrosinase family. Hemocyanin subfamily. Tarantula hemocyanin is a 24-chain polymer with seven different chains identified. In terms of tissue distribution, hemolymph.

It is found in the secreted. The protein resides in the extracellular space. Hemocyanins are copper-containing oxygen carriers occurring freely dissolved in the hemolymph of many mollusks and arthropods. The polypeptide is Hemocyanin C chain (HCC) (Aphonopelma sp. (American tarantula)).